Reading from the N-terminus, the 1093-residue chain is Protein translocase subunit SecA (1093 aa).

ATP is bound by residues Gln-84, 102 to 106, and Asp-491; that span reads GEGKT. Disordered regions lie at residues 837 to 869 and 904 to 1062; these read QNLQEQSYKDPASDNLENNPEPKTGSQSQSEHE and SELE…TSEA. Composition is skewed to basic and acidic residues over residues 904-937, 944-971, and 978-1062; these read SELESKEKEQEEVKNQETQPKENKPAETKVDATK, EELKAKEVATVVEEKPKKVSKAKSEKLK, and PKDL…TSEA.

The protein belongs to the SecA family. In terms of assembly, monomer and homodimer. Part of the essential Sec protein translocation apparatus which comprises SecA, SecYEG and auxiliary proteins SecDF. Other proteins may also be involved.

The protein localises to the cell membrane. It is found in the cytoplasm. It catalyses the reaction ATP + H2O + cellular proteinSide 1 = ADP + phosphate + cellular proteinSide 2.. Functionally, part of the Sec protein translocase complex. Interacts with the SecYEG preprotein conducting channel. Has a central role in coupling the hydrolysis of ATP to the transfer of proteins into and across the cell membrane, serving as an ATP-driven molecular motor driving the stepwise translocation of polypeptide chains across the membrane. This is Protein translocase subunit SecA from Mycoplasmopsis synoviae (strain 53) (Mycoplasma synoviae).